Here is a 214-residue protein sequence, read N- to C-terminus: tRNA (guanine-N(7)-)-methyltransferase (214 aa).

Residues glutamate 43, glutamate 68, aspartate 95, and aspartate 117 each coordinate S-adenosyl-L-methionine. Aspartate 117 is a catalytic residue. Residues lysine 121, aspartate 153, and threonine 190 to glutamate 193 each bind substrate.

Belongs to the class I-like SAM-binding methyltransferase superfamily. TrmB family.

The catalysed reaction is guanosine(46) in tRNA + S-adenosyl-L-methionine = N(7)-methylguanosine(46) in tRNA + S-adenosyl-L-homocysteine. It functions in the pathway tRNA modification; N(7)-methylguanine-tRNA biosynthesis. Functionally, catalyzes the formation of N(7)-methylguanine at position 46 (m7G46) in tRNA. The polypeptide is tRNA (guanine-N(7)-)-methyltransferase (Staphylococcus aureus (strain COL)).